An 80-amino-acid chain; its full sequence is Toxin TdNa1 (80 aa).

A signal peptide spans 1-20; that stretch reads MKGIILFISCLMLIDVVVES. Residues 21–79 enclose the LCN-type CS-alpha/beta domain; that stretch reads RDAYPADWRGCKFSCFWGSSSWCNEECTSLGGSSGYCAWPACWCYGLPDSVRYYNNKCH. Intrachain disulfides connect cysteine 31–cysteine 78, cysteine 35–cysteine 57, cysteine 43–cysteine 62, and cysteine 47–cysteine 64.

The protein belongs to the long (4 C-C) scorpion toxin superfamily. Sodium channel inhibitor family. Beta subfamily. In terms of tissue distribution, expressed by the venom gland.

It is found in the secreted. Inhibits the sodium (Nav) currents in an apparent irreversible manner. Produces small depolarization and induces repetitive firing in squid axons. Is specific for arthropods (crickets, triatomides, crabs and squids), but is non-toxic to mice. This chain is Toxin TdNa1, found in Tityus discrepans (Venezuelan scorpion).